Consider the following 271-residue polypeptide: Probable esterase D14L (271 aa).

Serine 96 (nucleophile) is an active-site residue. Residues aspartate 218 and histidine 247 contribute to the active site.

The protein belongs to the AB hydrolase superfamily. As to quaternary structure, component of an intracellular receptor complex involved in the detection of the smoke compound karrikin. In terms of tissue distribution, expressed constitutively in all organs (e.g. roots, stems, leaves, panicles and embryos).

It localises to the nucleus. The protein localises to the cytoplasm. In terms of biological role, may be involved in strigolactone signaling pathway. Essential for plant responses to karrikins, a class of butenolide compounds, structurally similar to strigolactones, released from burning vegetation that stimulate seed germination and enhance seedling photomorphogenesis. Mediates a specific perception of karrikin. Required for the establishment of symbiosis with the arbuscular mycorrhizal fungi (AMF) Rhizophagus irregularis and Gigaspora rosea. Karrikin binding induces a conformational change. This is Probable esterase D14L (D14L) from Oryza sativa subsp. japonica (Rice).